We begin with the raw amino-acid sequence, 561 residues long: DNA ligase B (561 aa).

Lys-128 serves as the catalytic N6-AMP-lysine intermediate.

This sequence belongs to the NAD-dependent DNA ligase family. LigB subfamily.

The catalysed reaction is NAD(+) + (deoxyribonucleotide)n-3'-hydroxyl + 5'-phospho-(deoxyribonucleotide)m = (deoxyribonucleotide)n+m + AMP + beta-nicotinamide D-nucleotide.. In terms of biological role, catalyzes the formation of phosphodiester linkages between 5'-phosphoryl and 3'-hydroxyl groups in double-stranded DNA using NAD as a coenzyme and as the energy source for the reaction. The chain is DNA ligase B from Pseudomonas syringae pv. tomato (strain ATCC BAA-871 / DC3000).